The following is a 650-amino-acid chain: MRSGLCTPAEALEMPSSTEAATDECDDAELRCRVAVEELSPGGQPRKRQALRAAELSLGRNERRELMLRLQAPGPTGRPRCFPLRAVRLFTRFAATGRSTLRLPTDGVPGAGSVQLLLSDCPPERLRRFLRTLRLKLAVAPGPGPASARAQLLGPRPRDFVTISPVQPEELQRAAATKAPDSALEKRPMESQTSTEAPRWPLPVKKLRMPSTKPKLSEEQAAVLRMVLKGQSIFFTGSAGTGKSYLLKHILGSLPPTGTVATASTGVAACHIGGTTLHAFAGIGSGQAPLAQCMALANRPGVRQGWLNCQRLVIDEISMVEADFFDKLEAVARAVRQQKKPFGGIQLIICGDFLQLPPVTKGSQQPQFCFQAKSWRRCVPVILELTEVWRQADQTFISLLQAVRLGRCSDEVTRQLRATAAHKVGRDGIVATRLCTHQDDVALTNEKWLKALPGDVHSFEAIDSDPELSRTLDAQCPVSRVLQLKLGAQVMLVKNLAVSRGLVNGARGVVVGFESEGRGLPRVRFLCGITEVIRTDRWTVQVTGGQYLSRQQLPLQLAWAISIHKSQGMSLDCVEISLGRVFASGQAYVALSRARSLQGLRVLDFDPTVVRCDSRVLHFYATLRQGRGLSLESQDDEEANSDLENMDPNL.

A PINT region spans residues 14 to 192 (MPSSTEAATD…ALEKRPMESQ (179 aa)). Serine 40 and serine 164 each carry phosphoserine. The tract at residues 171 to 199 (LQRAAATKAPDSALEKRPMESQTSTEAPR) is disordered. 237 to 244 (GSAGTGKS) lines the ATP pocket. Residues 586 to 605 (QAYVALSRARSLQGLRVLDF) mediate DNA binding. Positions 631-650 (LESQDDEEANSDLENMDPNL) are disordered. Positions 633–650 (SQDDEEANSDLENMDPNL) are enriched in acidic residues.

It belongs to the helicase family. PIF1 subfamily. Monomer. Interacts with telomerase. Mg(2+) is required as a cofactor.

It is found in the nucleus. The protein localises to the mitochondrion. It carries out the reaction Couples ATP hydrolysis with the unwinding of duplex DNA at the replication fork by translocating in the 5'-3' direction. This creates two antiparallel DNA single strands (ssDNA). The leading ssDNA polymer is the template for DNA polymerase III holoenzyme which synthesizes a continuous strand.. The catalysed reaction is ATP + H2O = ADP + phosphate + H(+). DNA-dependent ATPase and 5'-3' DNA helicase required for the maintenance of both mitochondrial and nuclear genome stability. Efficiently unwinds G-quadruplex (G4) DNA structures and forked RNA-DNA hybrids. Resolves G4 structures, preventing replication pausing and double-strand breaks (DSBs) at G4 motifs. Involved in the maintenance of telomeric DNA. Inhibits telomere elongation, de novo telomere formation and telomere addition to DSBs via catalytic inhibition of telomerase. Reduces the processivity of telomerase by displacing active telomerase from DNA ends. Releases telomerase by unwinding the short telomerase RNA/telomeric DNA hybrid that is the intermediate in the telomerase reaction. Possesses an intrinsic strand annealing activity. The sequence is that of ATP-dependent DNA helicase PIF1 from Mus musculus (Mouse).